A 267-amino-acid polypeptide reads, in one-letter code: MAGNFWQSSHSQQWILDKPDLLRERQHDLLALNEDEYQKVFIFFANVIQVLGEQLKLRQQVIATATVYFKRFYARNSLKNIDPLLLAPTCILLASKVEEFGVISNSRLISICQSAIKTKFSYAYAQEFPYRTNHILECEFYLLENLDCCLIVYQPYRPLLQLVQDMGQEDQLLTLSWRIVNDSLRTDVCLLYPPYQIAIACLQIACVILQKDATKQWFAELNVDLDKVQEIVRAIVNLYELWKDWKEKDEIQMLLSKIPKPKPPPQR.

Positions 48–151 constitute a Cyclin N-terminal domain; that stretch reads IQVLGEQLKL…LLENLDCCLI (104 aa).

The protein belongs to the cyclin family. Cyclin C subfamily. As to quaternary structure, component of the Cdk8 module of the Mediator complex, composed of CycC, Cdk8, kto and skd.

The protein resides in the nucleus. In terms of biological role, component of the Mediator complex, a coactivator involved in regulated gene transcription of nearly all RNA polymerase II-dependent genes. Mediator functions as a bridge to convey information from gene-specific regulatory proteins to the basal RNA polymerase II transcription machinery. Mediator is recruited to promoters by direct interactions with regulatory proteins and serves as a scaffold for the assembly of a functional preinitiation complex with RNA polymerase II and the general transcription factors. Binds to and activates cyclin-dependent kinase Cdk8 that phosphorylates the CTD (C-terminal domain) of the large subunit of RNA polymerase II (RNAp II), which may inhibit the formation of a transcription initiation complex. Required for leg and eye development and macrochaete specification or differentiation. The chain is Cyclin-C (CycC) from Drosophila melanogaster (Fruit fly).